The chain runs to 5148 residues: E3 ubiquitin-protein ligase RNF213 (5148 aa).

Positions 38-48 (DNTLVVSSTPE) are enriched in polar residues. Residues 38–341 (DNTLVVSSTP…QAAAPEPTSA (304 aa)) form a disordered region. Residues 69-78 (PGKELEKPEE) show a composition bias toward basic and acidic residues. A compositionally biased stretch (polar residues) spans 101-113 (GTISSSEAPSSGL). Over residues 130 to 146 (PQNQAQQGGAASQPGHP) the composition is skewed to low complexity. The residue at position 196 (serine 196) is a Phosphoserine. Basic and acidic residues-rich tracts occupy residues 233–245 (SKGE…KKVP), 257–267 (AGKETGEDVRK), and 279–289 (KHGDQEAELKG). Residues 319–335 (AAAVKTQQAAAPQQAAA) show a composition bias toward low complexity. Lysine 1128 participates in a covalent cross-link: Glycyl lysine isopeptide (Lys-Gly) (interchain with G-Cter in SUMO2). ATP-binding positions include 1957 to 1962 (GVGKSL), glutamate 2060, alanine 2114, aspartate 2116, and arginine 2177. Phosphoserine is present on serine 2234. ATP contacts are provided by lysine 2460 and serine 2535. Positions 3435-3465 (EEMEIETSQSKELAEEQMEVEDSEEMKKASD) form a coiled coil. The Zn(2+) site is built by cysteine 3947, cysteine 3950, cysteine 3962, histidine 3964, cysteine 3967, cysteine 3970, cysteine 3982, cysteine 3985, cysteine 4451, and histidine 4455. Residues 3947–3986 (CFICHGDAQDPVCLPCDHVYCLRCIQTWLIPGQMMCPYCL) form an RING-type zinc finger. Residues 4429 to 4501 (MPEDLLVHAR…IRNNEDRTQT (73 aa)) form an RZ-type zinc finger. The active-site Nucleophile; for E3 ubiquitin-lipopolysaccharide ligase activity is the cysteine 4462. Zn(2+) is bound by residues cysteine 4471 and cysteine 4474.

This sequence belongs to the AAA ATPase family. As to quaternary structure, monomer. Interacts with UBE2L3/UBCH7; UBE2L3/UBCH7 is the most efficient ubiquitin-conjugating enzyme E2 for the ubiquitin ligase activity. Interacts with UBE2N/UBC13; promoting 'Lys-63'-linked ubiquitination of target proteins.

The protein resides in the cytoplasm. Its subcellular location is the cytosol. The protein localises to the lipid droplet. The enzyme catalyses S-ubiquitinyl-[E2 ubiquitin-conjugating enzyme]-L-cysteine + [acceptor protein]-L-lysine = [E2 ubiquitin-conjugating enzyme]-L-cysteine + N(6)-ubiquitinyl-[acceptor protein]-L-lysine.. The catalysed reaction is ATP + H2O = ADP + phosphate + H(+). The protein operates within protein modification; protein ubiquitination. Functionally, atypical E3 ubiquitin ligase that can catalyze ubiquitination of both proteins and lipids, and which is involved in various processes, such as lipid metabolism, angiogenesis and cell-autonomous immunity. Acts as a key immune sensor by catalyzing ubiquitination of the lipid A moiety of bacterial lipopolysaccharide (LPS) via its RZ-type zinc-finger: restricts the proliferation of cytosolic bacteria, such as Salmonella, by generating the bacterial ubiquitin coat through the ubiquitination of LPS. Also acts indirectly by mediating the recruitment of the LUBAC complex, which conjugates linear polyubiquitin chains. Ubiquitination of LPS triggers cell-autonomous immunity, such as antibacterial autophagy, leading to degradation of the microbial invader. Involved in lipid metabolism by regulating fat storage and lipid droplet formation; act by inhibiting the lipolytic process. Also regulates lipotoxicity by inhibiting desaturation of fatty acids. Also acts as an E3 ubiquitin-protein ligase via its RING-type zinc finger: mediates 'Lys-63'-linked ubiquitination of target proteins. Involved in the non-canonical Wnt signaling pathway in vascular development: acts by mediating ubiquitination and degradation of FLNA and NFATC2 downstream of RSPO3, leading to inhibit the non-canonical Wnt signaling pathway and promoting vessel regression. Also has ATPase activity; ATPase activity is required for ubiquitination of LPS. This chain is E3 ubiquitin-protein ligase RNF213, found in Mus musculus (Mouse).